We begin with the raw amino-acid sequence, 312 residues long: MEGECRVLSIQSHVVRGYVGNRAAMFPLQVLGFEVDAVNSVQFSNHTGYAHWKGQVLTSQELHALYEGLKANNVNKYDYVLTGYTRDKSFLGMVVDIVQELKQQNSRLVYVCDPVMGDKWNGEGSMYVPQDLLPVYREKVVPMADIITPNQFEAELLSGRKIHSQEEAFAVMDVLHRMGPDTVVITSSDLPSPKGSDYLMALGSQRMRKPDGSTVTQRIRMEMRKVDPVFVGTGDLFAAMLLAWTHKHPDNLKVACEKTVSAMQHVLQRTIRCAKAEAGEGQKPSPAQLELRMVQSRKDIEDPEIVVQATVL.

Met1 is subject to N-acetylmethionine. Positions 12 and 47 each coordinate pyridoxal. Thr47 provides a ligand contact to pyridoxal 5'-phosphate. Residue Ser59 is modified to Phosphoserine. Asp113 serves as a coordination point for ATP. Asp113 contacts Na(+). Residue Asp118 participates in Mg(2+) binding. Residue Thr148 coordinates Na(+). An ATP-binding site is contributed by 150 to 153 (NQFE). Ser164 is modified (phosphoserine). Thr186 serves as a coordination point for Na(+). Position 186 to 187 (186 to 187 (TS)) interacts with ATP. Ser213 carries the phosphoserine modification. ATP-binding positions include 226 to 228 (VDP) and Thr233. 234–235 (GD) contributes to the pyridoxal 5'-phosphate binding site. Asp235 (proton acceptor) is an active-site residue. Ser285 bears the Phosphoserine mark.

Belongs to the pyridoxine kinase family. As to quaternary structure, homodimer. Zn(2+) serves as cofactor. The cofactor is Mg(2+).

The protein resides in the cytoplasm. It localises to the cytosol. It carries out the reaction pyridoxal + ATP = pyridoxal 5'-phosphate + ADP + H(+). The enzyme catalyses pyridoxamine + ATP = pyridoxamine 5'-phosphate + ADP + H(+). It catalyses the reaction pyridoxine + ATP = pyridoxine 5'-phosphate + ADP + H(+). The protein operates within cofactor metabolism; pyridoxal 5'-phosphate salvage; pyridoxal 5'-phosphate from pyridoxal: step 1/1. Its pathway is cofactor metabolism; pyridoxal 5'-phosphate salvage; pyridoxine 5'-phosphate from pyridoxine: step 1/1. It functions in the pathway cofactor metabolism; pyridoxal 5'-phosphate salvage; pyridoxamine 5'-phosphate from pyridoxamine: step 1/1. Its activity is regulated as follows. Activity is increased in the presence of K(+)or Na(+). Its function is as follows. Catalyzes the phosphorylation of the dietary vitamin B6 vitamers pyridoxal (PL), pyridoxine (PN) and pyridoxamine (PM) to form pyridoxal 5'-phosphate (PLP), pyridoxine 5'-phosphate (PNP) and pyridoxamine 5'-phosphate (PMP), respectively. PLP is the active form of vitamin B6, and acts as a cofactor for over 140 different enzymatic reactions. This is Pyridoxal kinase (Pdxk) from Rattus norvegicus (Rat).